A 72-amino-acid chain; its full sequence is Translation initiation factor IF-1 (72 aa).

The region spanning 1–72 (MAKEDNFELE…SKGRITYRAR (72 aa)) is the S1-like domain.

This sequence belongs to the IF-1 family. In terms of assembly, component of the 30S ribosomal translation pre-initiation complex which assembles on the 30S ribosome in the order IF-2 and IF-3, IF-1 and N-formylmethionyl-tRNA(fMet); mRNA recruitment can occur at any time during PIC assembly.

The protein resides in the cytoplasm. Functionally, one of the essential components for the initiation of protein synthesis. Stabilizes the binding of IF-2 and IF-3 on the 30S subunit to which N-formylmethionyl-tRNA(fMet) subsequently binds. Helps modulate mRNA selection, yielding the 30S pre-initiation complex (PIC). Upon addition of the 50S ribosomal subunit IF-1, IF-2 and IF-3 are released leaving the mature 70S translation initiation complex. The polypeptide is Translation initiation factor IF-1 (Saccharophagus degradans (strain 2-40 / ATCC 43961 / DSM 17024)).